We begin with the raw amino-acid sequence, 427 residues long: Glutamate-1-semialdehyde 2,1-aminomutase (427 aa).

K265 bears the N6-(pyridoxal phosphate)lysine mark.

Belongs to the class-III pyridoxal-phosphate-dependent aminotransferase family. HemL subfamily. In terms of assembly, homodimer. It depends on pyridoxal 5'-phosphate as a cofactor.

Its subcellular location is the cytoplasm. It catalyses the reaction (S)-4-amino-5-oxopentanoate = 5-aminolevulinate. Its pathway is porphyrin-containing compound metabolism; protoporphyrin-IX biosynthesis; 5-aminolevulinate from L-glutamyl-tRNA(Glu): step 2/2. This chain is Glutamate-1-semialdehyde 2,1-aminomutase, found in Pseudomonas putida (strain GB-1).